Here is a 208-residue protein sequence, read N- to C-terminus: Major capsid protein (208 aa).

Residues 1-17 (MSTVVVKGNVNGGVQQP) show a composition bias toward low complexity. The segment at 1–68 (MSTVVVKGNV…RTGVPRGRGS (68 aa)) is disordered. Basic residues-rich tracts occupy residues 18 to 30 (RMRR…RRAN) and 44 to 61 (PRRR…RRTG).

It belongs to the luteoviruses capsid protein family.

The protein resides in the virion. In terms of biological role, major capsid protein that self-assembles to form an icosahedral capsid with a T=3 symmetry, about 23 nm in diameter, and consisting of 180 capsid proteins monomers. Most of the 180 monomers are the major capsid protein, but a small percentage contain the minor capsid protein, which has a long C-terminal extension. This Potato leafroll virus (strain Potato/Scotland/strain 1/1984) (PLrV) protein is Major capsid protein.